The sequence spans 446 residues: Transcription factor SOX-8 (446 aa).

3 disordered regions span residues 1 to 58 (MLDM…DPAE), 155 to 259 (AERL…RQNI), and 318 to 378 (HKSA…PFAG). The segment covering 40–53 (EGLGRAGVAVGGAR) has biased composition (gly residues). The tract at residues 58–100 (EAADERFPACIRDAVSQVLKGYDWSLVPMPVRGGGGGALKAKP) is dimerization (DIM). A DNA-binding region (HMG box) is located at residues 102–170 (VKRPMNAFMV…QHKKDHPDYK (69 aa)). 3 stretches are compositionally biased toward basic and acidic residues: residues 155–171 (AERL…DYKY), 210–219 (DGHHHGDHTG), and 242–253 (PELKLEGRRPVD). Residues 224–298 (PPTPPTTPKT…LPLGGPAPPE (75 aa)) are transactivation domain (TAM). The interval 335 to 446 (RPHIKTEQPS…QPVYTTLTRP (112 aa)) is transactivation domain (TAC). Low complexity predominate over residues 362 to 378 (SGQSSATPAAPAGPFAG). Residues 400-408 (PGLYQYPCF) carry the 9aaTAD motif. The disordered stretch occupies residues 425–446 (LPPAHSPTSHWDQPVYTTLTRP). Positions 430–446 (SPTSHWDQPVYTTLTRP) are enriched in polar residues.

The protein localises to the nucleus. Functionally, transcription factor that may play a role in central nervous system, limb and facial development. May be involved in male sex determination. Binds the consensus motif 5'-[AT][AT]CAA[AT]G-3'. The polypeptide is Transcription factor SOX-8 (Homo sapiens (Human)).